A 227-amino-acid chain; its full sequence is Cytochrome c oxidase subunit 2 (227 aa).

Over 1-14 the chain is Mitochondrial intermembrane; it reads MAYPFELGFQDATS. The chain crosses the membrane as a helical span at residues 15–45; sequence PIMEELLHFHDHTLMIVFLISSLVLYIISLM. Residues 46-59 are Mitochondrial matrix-facing; sequence LTTKLTHTSTMDAQ. A helical transmembrane segment spans residues 60 to 87; sequence EVETIWTILPAIILILIALPSLRILYMM. Topologically, residues 88 to 227 are mitochondrial intermembrane; the sequence is DEINDPSLTV…HFENWSSSML (140 aa). Cu cation contacts are provided by His161, Cys196, Glu198, Cys200, His204, and Met207. Glu198 is a Mg(2+) binding site.

This sequence belongs to the cytochrome c oxidase subunit 2 family. In terms of assembly, component of the cytochrome c oxidase (complex IV, CIV), a multisubunit enzyme composed of 14 subunits. The complex is composed of a catalytic core of 3 subunits MT-CO1, MT-CO2 and MT-CO3, encoded in the mitochondrial DNA, and 11 supernumerary subunits COX4I, COX5A, COX5B, COX6A, COX6B, COX6C, COX7A, COX7B, COX7C, COX8 and NDUFA4, which are encoded in the nuclear genome. The complex exists as a monomer or a dimer and forms supercomplexes (SCs) in the inner mitochondrial membrane with NADH-ubiquinone oxidoreductase (complex I, CI) and ubiquinol-cytochrome c oxidoreductase (cytochrome b-c1 complex, complex III, CIII), resulting in different assemblies (supercomplex SCI(1)III(2)IV(1) and megacomplex MCI(2)III(2)IV(2)). Found in a complex with TMEM177, COA6, COX18, COX20, SCO1 and SCO2. Interacts with TMEM177 in a COX20-dependent manner. Interacts with COX20. Interacts with COX16. The cofactor is Cu cation.

The protein localises to the mitochondrion inner membrane. It catalyses the reaction 4 Fe(II)-[cytochrome c] + O2 + 8 H(+)(in) = 4 Fe(III)-[cytochrome c] + 2 H2O + 4 H(+)(out). Its function is as follows. Component of the cytochrome c oxidase, the last enzyme in the mitochondrial electron transport chain which drives oxidative phosphorylation. The respiratory chain contains 3 multisubunit complexes succinate dehydrogenase (complex II, CII), ubiquinol-cytochrome c oxidoreductase (cytochrome b-c1 complex, complex III, CIII) and cytochrome c oxidase (complex IV, CIV), that cooperate to transfer electrons derived from NADH and succinate to molecular oxygen, creating an electrochemical gradient over the inner membrane that drives transmembrane transport and the ATP synthase. Cytochrome c oxidase is the component of the respiratory chain that catalyzes the reduction of oxygen to water. Electrons originating from reduced cytochrome c in the intermembrane space (IMS) are transferred via the dinuclear copper A center (CU(A)) of subunit 2 and heme A of subunit 1 to the active site in subunit 1, a binuclear center (BNC) formed by heme A3 and copper B (CU(B)). The BNC reduces molecular oxygen to 2 water molecules using 4 electrons from cytochrome c in the IMS and 4 protons from the mitochondrial matrix. This chain is Cytochrome c oxidase subunit 2 (MT-CO2), found in Tamias amoenus (Yellow-pine chipmunk).